The chain runs to 121 residues: Small ribosomal subunit protein uS13 (121 aa).

The interval lysine 92 to lysine 121 is disordered.

Belongs to the universal ribosomal protein uS13 family. As to quaternary structure, part of the 30S ribosomal subunit. Forms a loose heterodimer with protein S19. Forms two bridges to the 50S subunit in the 70S ribosome.

In terms of biological role, located at the top of the head of the 30S subunit, it contacts several helices of the 16S rRNA. In the 70S ribosome it contacts the 23S rRNA (bridge B1a) and protein L5 of the 50S subunit (bridge B1b), connecting the 2 subunits; these bridges are implicated in subunit movement. Contacts the tRNAs in the A and P-sites. The chain is Small ribosomal subunit protein uS13 from Bordetella bronchiseptica (strain ATCC BAA-588 / NCTC 13252 / RB50) (Alcaligenes bronchisepticus).